Here is a 169-residue protein sequence, read N- to C-terminus: MLSPKDRADLEERISKIVVSKGFYFIDLEERMEKGAHIISVVVHGEPSVTIGDCEKLTRAILPLLESFPWYGDNDHLEVTSPGLDRVLKREWEYEIFKGRVIDISFDRDGKSQTIRAKLVGRENENVVIEYEGNYFRIPFDQVRKAKLVFDEGGKEHGKKQKRSHRKGT.

Belongs to the RimP family.

The protein localises to the cytoplasm. Required for maturation of 30S ribosomal subunits. This chain is Ribosome maturation factor RimP, found in Coprothermobacter proteolyticus (strain ATCC 35245 / DSM 5265 / OCM 4 / BT).